The chain runs to 110 residues: Phosphoribosyl-AMP cyclohydrolase (110 aa).

A Mg(2+)-binding site is contributed by Asp-80. Cys-81 is a Zn(2+) binding site. Mg(2+) is bound by residues Asp-82 and Asp-84. Positions 97 and 104 each coordinate Zn(2+).

The protein belongs to the PRA-CH family. As to quaternary structure, homodimer. The cofactor is Mg(2+). It depends on Zn(2+) as a cofactor.

Its subcellular location is the cytoplasm. The enzyme catalyses 1-(5-phospho-beta-D-ribosyl)-5'-AMP + H2O = 1-(5-phospho-beta-D-ribosyl)-5-[(5-phospho-beta-D-ribosylamino)methylideneamino]imidazole-4-carboxamide. It participates in amino-acid biosynthesis; L-histidine biosynthesis; L-histidine from 5-phospho-alpha-D-ribose 1-diphosphate: step 3/9. Catalyzes the hydrolysis of the adenine ring of phosphoribosyl-AMP. The polypeptide is Phosphoribosyl-AMP cyclohydrolase (Clostridium botulinum (strain Kyoto / Type A2)).